The chain runs to 85 residues: Antifungal protein (85 aa).

Residues 1-18 form the signal peptide; the sequence is MVKLFVIVILALIAVAFG. Repeat copies occupy residues 19 to 25 and 67 to 73. The tract at residues 19-73 is 2 X 7 AA repeats of Q-H-G-H-G-G-Q; sequence QHGHGGQDQHGYGHGQQAVYGKGHEGHGVNNLGQDGHGQHGYAHGHSDQHGHGGQ. The segment covering 22–32 has biased composition (gly residues); it reads HGGQDQHGYGH. The segment at 22–85 is disordered; the sequence is HGGQDQHGYG…QHDGYKNRGY (64 aa). The span at 63–85 shows a compositional bias: basic and acidic residues; that stretch reads GHSDQHGHGGQHGQHDGYKNRGY.

As to quaternary structure, homodimer. Post-translationally, the N-terminus is blocked. As to expression, hemolymph.

Its function is as follows. This protein inhibits the growth of a variety of fungal species. The antifungal activity of this protein is enhanced by the presence of sarcotoxin IA. The chain is Antifungal protein from Sarcophaga peregrina (Flesh fly).